The chain runs to 188 residues: UPF0398 protein OEOE_1093 (188 aa).

Belongs to the UPF0398 family.

This Oenococcus oeni (strain ATCC BAA-331 / PSU-1) protein is UPF0398 protein OEOE_1093.